Here is a 166-residue protein sequence, read N- to C-terminus: PTS system glucose-specific EIIA component (166 aa).

Positions 34-138 (DPVFAQKMMG…SIISPIIITN (105 aa)) constitute a PTS EIIA type-1 domain. Zn(2+)-binding residues include histidine 71 and histidine 86. The Tele-phosphohistidine intermediate; for EIIA activity role is filled by histidine 86. Histidine 86 carries the post-translational modification Phosphohistidine; by HPr.

Heterodimer with glycerol kinase (glpk). Zn(2+) is required as a cofactor.

Its subcellular location is the cytoplasm. Its function is as follows. The phosphoenolpyruvate-dependent sugar phosphotransferase system (sugar PTS), a major carbohydrate active transport system, catalyzes the phosphorylation of incoming sugar substrates concomitantly with their translocation across the cell membrane. The enzyme II complex composed of PtsG and Crr is involved in glucose transport. This chain is PTS system glucose-specific EIIA component (crr), found in Staphylococcus epidermidis (strain ATCC 35984 / DSM 28319 / BCRC 17069 / CCUG 31568 / BM 3577 / RP62A).